Consider the following 94-residue polypeptide: Putative defensin-like protein 88 (94 aa).

The signal sequence occupies residues Met-1 to Ser-26. 3 disulfide bridges follow: Cys-32–Cys-72, Cys-38–Cys-59, and Cys-48–Cys-71.

The protein belongs to the DEFL family.

The protein localises to the secreted. The sequence is that of Putative defensin-like protein 88 from Arabidopsis thaliana (Mouse-ear cress).